The chain runs to 417 residues: Putative Bro-N domain-containing protein 289L (417 aa).

One can recognise a Bro-N domain in the interval 4–134 (LINLKDCKEY…VILPSIRKFG (131 aa)). Residues 152–193 (KDKSEQELQFQLKQEREEKENAYIKLRSETKRLKQQIKRTLE) are a coiled coil.

The protein belongs to the IIV-6 201R/289L family.

This chain is Putative Bro-N domain-containing protein 289L, found in Invertebrate iridescent virus 6 (IIV-6).